The sequence spans 561 residues: Malate synthase, glyoxysomal (561 aa).

Residue Arg-177 is the Proton acceptor of the active site. Residue Asp-462 is the Proton donor of the active site. A Microbody targeting signal motif is present at residues 559–561 (SRL).

It belongs to the malate synthase family.

The protein localises to the glyoxysome. The catalysed reaction is glyoxylate + acetyl-CoA + H2O = (S)-malate + CoA + H(+). Its pathway is carbohydrate metabolism; glyoxylate cycle; (S)-malate from isocitrate: step 2/2. The sequence is that of Malate synthase, glyoxysomal from Brassica napus (Rape).